Reading from the N-terminus, the 444-residue chain is Phosphoglucosamine mutase (444 aa).

Residue Ser101 is the Phosphoserine intermediate of the active site. 4 residues coordinate Mg(2+): Ser101, Asp240, Asp242, and Asp244. At Ser101 the chain carries Phosphoserine.

Belongs to the phosphohexose mutase family. It depends on Mg(2+) as a cofactor. In terms of processing, activated by phosphorylation.

It carries out the reaction alpha-D-glucosamine 1-phosphate = D-glucosamine 6-phosphate. In terms of biological role, catalyzes the conversion of glucosamine-6-phosphate to glucosamine-1-phosphate. This chain is Phosphoglucosamine mutase, found in Aeromonas salmonicida (strain A449).